A 396-amino-acid chain; its full sequence is 1-deoxy-D-xylulose 5-phosphate reductoisomerase (396 aa).

Residues Thr-15, Gly-16, Ser-17, Ile-18, Gly-41, and Asn-129 each contribute to the NADPH site. Residue Lys-130 coordinates 1-deoxy-D-xylulose 5-phosphate. Glu-131 is an NADPH binding site. Asp-155 contributes to the Mn(2+) binding site. 1-deoxy-D-xylulose 5-phosphate is bound by residues Ser-156, Glu-157, Ser-182, and His-205. Glu-157 provides a ligand contact to Mn(2+). Gly-211 contacts NADPH. 1-deoxy-D-xylulose 5-phosphate is bound by residues Ser-218, Asn-223, Lys-224, and Glu-227. Residue Glu-227 coordinates Mn(2+).

This sequence belongs to the DXR family. Mg(2+) is required as a cofactor. It depends on Mn(2+) as a cofactor.

It carries out the reaction 2-C-methyl-D-erythritol 4-phosphate + NADP(+) = 1-deoxy-D-xylulose 5-phosphate + NADPH + H(+). It participates in isoprenoid biosynthesis; isopentenyl diphosphate biosynthesis via DXP pathway; isopentenyl diphosphate from 1-deoxy-D-xylulose 5-phosphate: step 1/6. Its function is as follows. Catalyzes the NADPH-dependent rearrangement and reduction of 1-deoxy-D-xylulose-5-phosphate (DXP) to 2-C-methyl-D-erythritol 4-phosphate (MEP). The polypeptide is 1-deoxy-D-xylulose 5-phosphate reductoisomerase (Xanthomonas oryzae pv. oryzae (strain MAFF 311018)).